The following is a 149-amino-acid chain: Arginine repressor (149 aa).

The protein belongs to the ArgR family.

Its subcellular location is the cytoplasm. It participates in amino-acid biosynthesis; L-arginine biosynthesis [regulation]. Functionally, regulates arginine biosynthesis genes. The protein is Arginine repressor of Halalkalibacterium halodurans (strain ATCC BAA-125 / DSM 18197 / FERM 7344 / JCM 9153 / C-125) (Bacillus halodurans).